The chain runs to 1719 residues: Sodium channel protein type 4 subunit alpha B (1719 aa).

Topologically, residues 1–126 (MRTLLPPVGS…IVAIKILIHS (126 aa)) are cytoplasmic. Residues 28–50 (QQIREEERKRTNAQVSEELPEPA) form a disordered region. Residues 108 to 431 (LLSPFNALRI…VVAMAYAEQN (324 aa)) form an I repeat. The chain crosses the membrane as a helical span at residues 127 to 145 (LFSLFIMATILTNCAFMTL). At 146–152 (SDPPAWS) the chain is on the extracellular side. A helical transmembrane segment spans residues 153 to 173 (KTMEYVFTFIYTFEATIKILS). At 174-187 (RGFCVGKFTFLKDP) the chain is on the cytoplasmic side. A helical transmembrane segment spans residues 188 to 205 (WNWLDFMVISMAYLTELV). The Extracellular segment spans residues 206-211 (DLGNVS). A glycan (N-linked (GlcNAc...) asparagine) is linked at asparagine 209. A helical membrane pass occupies residues 212–228 (VLRTFRVLRALKTITVI). Over 229-247 (PGLKTIVGALIQSVRKLAD) the chain is Cytoplasmic. Residues 248-267 (AMVLTVFCLSVFALIGLQLF) traverse the membrane as a helical segment. Residues 268–368 (MGNLRQKCVL…PNYGYTSYDS (101 aa)) lie on the Extracellular side of the membrane. Cysteines 275 and 337 form a disulfide. 2 N-linked (GlcNAc...) asparagine glycosylation sites follow: asparagine 285 and asparagine 339. Cysteine 346 and cysteine 352 are disulfide-bonded. The segment at residues 369-393 (FGWAFLALFRLMTQDFWENLFQLTL) is an intramembrane region (pore-forming). Residues 394–400 (RTAGKTY) lie on the Extracellular side of the membrane. A helical membrane pass occupies residues 401–421 (MIFFVVVIFLGSFYLINLILA). The Cytoplasmic portion of the chain corresponds to 422-513 (VVAMAYAEQN…ECLYAIVMDP (92 aa)). The stretch at 495–766 (CCGCWRHLKE…QIAINRINRA (272 aa)) is one II repeat. The helical transmembrane segment at 514-532 (FVDLGITICIILNTVFMAM) threads the bilayer. At 533–543 (EHYPMSADFEE) the chain is on the extracellular side. A helical transmembrane segment spans residues 544–563 (LLSVGNLVFTGIFTGEMVFK). Residues 564 to 577 (ILAMDPYFYFQVGW) are Cytoplasmic-facing. Residues 578–597 (NIFDSIIVTISLVELGLANV) form a helical membrane-spanning segment. Residues 598–599 (QG) lie on the Extracellular side of the membrane. The chain crosses the membrane as a helical span at residues 600-617 (LSVLRSFRLMRVFKLAKS). The Cytoplasmic portion of the chain corresponds to 618-633 (WPTLNMLIKIIGNSVG). Residues 634–652 (ALGNLTLVLAIIVFIFAVV) form a helical membrane-spanning segment. Residues 653-681 (GMQLFGKNYKDCVCRISEDCVLPRWHMND) are Extracellular-facing. Cysteine 666 and cysteine 672 form a disulfide bridge. The pore-forming intramembrane region spans 682-702 (FFHAFLIIFRVLCGEWIESMW). At 703 to 713 (DCMEVSGQTMC) the chain is on the extracellular side. A disulfide bridge connects residues cysteine 704 and cysteine 713. Residues 714-732 (LIVFMMVLVIGNLVVLNLF) form a helical membrane-spanning segment. Topologically, residues 733 to 919 (LALLLSSFSG…TCFSIVENNY (187 aa)) are cytoplasmic. Over residues 834 to 845 (SDSDDSDYDEDK) the composition is skewed to acidic residues. The interval 834–862 (SDSDDSDYDEDKDSQCDESSVCSSVQKPE) is disordered. The III repeat unit spans residues 900–1215 (RGKIWCNIRR…KKYYNAMKKL (316 aa)). A helical membrane pass occupies residues 920–937 (FESFIVFMILLSSGALAF). Residues 938–950 (EDIYLEKHQLIKS) are Extracellular-facing. A helical transmembrane segment spans residues 951-969 (ILEYADKVFTYVFVMEMVL). The Cytoplasmic segment spans residues 970-983 (KWFAYGFKSYFSNA). The chain crosses the membrane as a helical span at residues 984–1002 (WCWLDFLIVDVSLVSLTAN). At 1003 to 1010 (ILGYSELG) the chain is on the extracellular side. A helical membrane pass occupies residues 1011-1029 (AIKSLRTLRALRPLRALSR). Topologically, residues 1030–1046 (FEGMRVVVNALVGAVPS) are cytoplasmic. The chain crosses the membrane as a helical span at residues 1047–1066 (IFNVLLVCLIFWLIFSIMGV). Topologically, residues 1067–1119 (NLFAGKFSYCFNETSQEIIDTKVVDNKTECIALIKANFTEVRWKNVKVNYDNV) are extracellular. Cysteine 1076 and cysteine 1096 are joined by a disulfide. 2 N-linked (GlcNAc...) asparagine glycosylation sites follow: asparagine 1078 and asparagine 1092. Positions 1120 to 1141 (GIGYLSLLQVATFKGWTDIMYA) form an intramembrane region, pore-forming. The Extracellular portion of the chain corresponds to 1142 to 1158 (AVDSRDVESQPIYEVNL). Residues 1159 to 1180 (YMYLYFVIFIIFGSFFTLNLFI) traverse the membrane as a helical segment. The Cytoplasmic portion of the chain corresponds to 1181–1243 (GVIIDNFNQQ…LVFDLVTKQI (63 aa)). The segment at 1199-1201 (IFM) is important for rapid channel inactivation. One copy of the IV repeat lies at 1224-1521 (VPRPENPFQG…WEKFDPDASQ (298 aa)). Residues 1244-1261 (FDVFIMVLICLNMVTMMV) traverse the membrane as a helical segment. Residues 1262-1272 (ETDEQSDKKEE) are Extracellular-facing. A helical membrane pass occupies residues 1273 to 1291 (VLYWINVVFILIFTTECTL). Residues 1292–1303 (KIIALRRHYFSI) lie on the Cytoplasmic side of the membrane. The helical transmembrane segment at 1304–1321 (GWNIFDFVVVILSILGLL) threads the bilayer. Residues 1322-1334 (LADIIEKYFVSPT) are Extracellular-facing. The helical transmembrane segment at 1335-1351 (LFRVIRLARIGRVLRLI) threads the bilayer. Over 1352–1370 (RGAKGIRTLLFALMMSLPA) the chain is Cytoplasmic. Residues 1371 to 1388 (LFNIGLLLFLIMFIFSIF) form a helical membrane-spanning segment. At 1389-1410 (GMSNFAYVKKEALIDDMFNFET) the chain is on the extracellular side. Positions 1411–1433 (FGNSMICLFMITTSAGWDGLLSP) form an intramembrane region, pore-forming. The Extracellular segment spans residues 1434 to 1462 (IMNTPPDCDPNVENPGTTVRGNCGSPAIG). A disulfide bond links cysteine 1441 and cysteine 1456. Residues 1463 to 1485 (IAFFSTYIIMSFLVVVNMFIAII) traverse the membrane as a helical segment. The Cytoplasmic portion of the chain corresponds to 1486–1719 (LENFNVATEE…QERDQRETSV (234 aa)). The region spanning 1615 to 1644 (EEVAATVIQRAYRKYLLLRTVRLASFMYRE) is the IQ domain.

It belongs to the sodium channel (TC 1.A.1.10) family. Nav1.4/SCN4A subfamily. As to quaternary structure, voltage-gated sodium (Nav) channels consist of an ion-conducting alpha subunit which is functional on its own associated with regulatory beta subunits.

The protein resides in the cell membrane. It carries out the reaction Na(+)(in) = Na(+)(out). Functionally, pore-forming subunit of a voltage-gated sodium (Nav) channel that directly mediates the depolarizing phase of action potentials in excitable membranes. Navs, also called VGSCs (voltage-gated sodium channels) or VDSCs (voltage-dependent sodium channels), operate by switching between closed and open conformations depending on the voltage difference across the membrane. In the open conformation they allow Na(+) ions to selectively pass through the pore, along their electrochemical gradient. The influx of Na+ ions provokes membrane depolarization, initiating the propagation of electrical signals throughout cells and tissues. This Takifugu rubripes (Japanese pufferfish) protein is Sodium channel protein type 4 subunit alpha B (scn4ab).